The primary structure comprises 91 residues: Small ribosomal subunit protein uS19 (91 aa).

Belongs to the universal ribosomal protein uS19 family.

In terms of biological role, protein S19 forms a complex with S13 that binds strongly to the 16S ribosomal RNA. In Pseudomonas fluorescens (strain Pf0-1), this protein is Small ribosomal subunit protein uS19.